A 279-amino-acid polypeptide reads, in one-letter code: Thymidylate synthase (279 aa).

R37 provides a ligand contact to dUMP. Residue H67 coordinates (6R)-5,10-methylene-5,6,7,8-tetrahydrofolate. 142-143 (RR) provides a ligand contact to dUMP. Catalysis depends on C162, which acts as the Nucleophile. DUMP is bound by residues 182–185 (RSAD), N193, and 223–225 (HLY). A (6R)-5,10-methylene-5,6,7,8-tetrahydrofolate-binding site is contributed by D185. S278 is a (6R)-5,10-methylene-5,6,7,8-tetrahydrofolate binding site.

Belongs to the thymidylate synthase family. Bacterial-type ThyA subfamily. In terms of assembly, homodimer.

It is found in the cytoplasm. It catalyses the reaction dUMP + (6R)-5,10-methylene-5,6,7,8-tetrahydrofolate = 7,8-dihydrofolate + dTMP. Its pathway is pyrimidine metabolism; dTTP biosynthesis. Functionally, catalyzes the reductive methylation of 2'-deoxyuridine-5'-monophosphate (dUMP) to 2'-deoxythymidine-5'-monophosphate (dTMP) while utilizing 5,10-methylenetetrahydrofolate (mTHF) as the methyl donor and reductant in the reaction, yielding dihydrofolate (DHF) as a by-product. This enzymatic reaction provides an intracellular de novo source of dTMP, an essential precursor for DNA biosynthesis. In Caulobacter vibrioides (strain ATCC 19089 / CIP 103742 / CB 15) (Caulobacter crescentus), this protein is Thymidylate synthase.